The sequence spans 431 residues: Mothers against decapentaplegic homolog 6 (431 aa).

Residues 1–15 are compositionally biased toward basic residues; it reads MFRSKRSGLVRRLWR. Residues 1–95 are disordered; that stretch reads MFRSKRSGLV…SPPGPGGGEA (95 aa). The span at 29-38 shows a compositional bias: polar residues; that stretch reads GQSSERNATA. Over residues 71 to 90 the composition is skewed to pro residues; it reads PELPPPPPPPPPGGASPPGP. Residues 85–209 enclose the MH1 domain; that stretch reads ASPPGPGGGE…FSRLCGPESP (125 aa). Residues cysteine 139, cysteine 182, cysteine 194, and histidine 199 each contribute to the Zn(2+) site. Positions 235-245 are enriched in polar residues; that stretch reads TETEATNSPNV. The disordered stretch occupies residues 235–258; sequence TETEATNSPNVTPGEFSDASTSPD. In terms of domain architecture, MH2 spans 265-431; the sequence is WCNVAYWEHR…WLEILLSNNR (167 aa).

Belongs to the dwarfin/SMAD family. Developing heart, eyes and limbs.

Its subcellular location is the nucleus. Its function is as follows. Transforming growth factor-beta superfamily receptors signaling occurs through the Smad family of intracellular mediators. SMAD6 is an inhibitory Smad (i-Smad) that negatively regulates signaling downstream of type I transforming growth factor-beta. Acts as a mediator of TGF-beta and BMP anti-inflammatory activities. Suppresses IL1R-TLR signaling through its direct interaction with PEL1, preventing NF-kappa-B activation, nuclear transport and NF-kappa-B-mediated expression of pro-inflammatory genes. Blocks the BMP-SMAD1 signaling pathway by competing with SMAD4 for receptor-activated SMAD1-binding. Binds to regulatory elements in target promoter regions. In Gallus gallus (Chicken), this protein is Mothers against decapentaplegic homolog 6 (SMAD6).